The following is a 549-amino-acid chain: Glucose-6-phosphate isomerase (549 aa).

Residue glutamate 355 is the Proton donor of the active site. Active-site residues include histidine 386 and lysine 514.

It belongs to the GPI family.

It is found in the cytoplasm. The catalysed reaction is alpha-D-glucose 6-phosphate = beta-D-fructose 6-phosphate. It functions in the pathway carbohydrate biosynthesis; gluconeogenesis. Its pathway is carbohydrate degradation; glycolysis; D-glyceraldehyde 3-phosphate and glycerone phosphate from D-glucose: step 2/4. In terms of biological role, catalyzes the reversible isomerization of glucose-6-phosphate to fructose-6-phosphate. This is Glucose-6-phosphate isomerase from Salmonella arizonae (strain ATCC BAA-731 / CDC346-86 / RSK2980).